Reading from the N-terminus, the 508-residue chain is Photosystem II CP47 reaction center protein (508 aa).

6 helical membrane passes run 21 to 36 (SVHI…WAGS), 101 to 115 (IVFS…IWHW), 140 to 156 (GIHL…FGAF), 203 to 218 (IAAG…FHLS), 237 to 252 (VLSS…AFVV), and 457 to 472 (TFAL…HGAR).

Belongs to the PsbB/PsbC family. PsbB subfamily. In terms of assembly, PSII is composed of 1 copy each of membrane proteins PsbA, PsbB, PsbC, PsbD, PsbE, PsbF, PsbH, PsbI, PsbJ, PsbK, PsbL, PsbM, PsbT, PsbX, PsbY, PsbZ, Psb30/Ycf12, at least 3 peripheral proteins of the oxygen-evolving complex and a large number of cofactors. It forms dimeric complexes. It depends on Binds multiple chlorophylls. PSII binds additional chlorophylls, carotenoids and specific lipids. as a cofactor.

The protein localises to the plastid. The protein resides in the chloroplast thylakoid membrane. One of the components of the core complex of photosystem II (PSII). It binds chlorophyll and helps catalyze the primary light-induced photochemical processes of PSII. PSII is a light-driven water:plastoquinone oxidoreductase, using light energy to abstract electrons from H(2)O, generating O(2) and a proton gradient subsequently used for ATP formation. This chain is Photosystem II CP47 reaction center protein, found in Chloranthus spicatus (Chulantree).